The chain runs to 122 residues: Large ribosomal subunit protein uL14 (122 aa).

It belongs to the universal ribosomal protein uL14 family. Part of the 50S ribosomal subunit. Forms a cluster with proteins L3 and L19. In the 70S ribosome, L14 and L19 interact and together make contacts with the 16S rRNA in bridges B5 and B8.

Its function is as follows. Binds to 23S rRNA. Forms part of two intersubunit bridges in the 70S ribosome. The sequence is that of Large ribosomal subunit protein uL14 from Bartonella bacilliformis (strain ATCC 35685 / KC583 / Herrer 020/F12,63).